The chain runs to 252 residues: Chitooligosaccharide deacetylase (252 aa).

H61 and H125 together coordinate Mg(2+).

The protein belongs to the YdjC deacetylase family. ChbG subfamily. As to quaternary structure, homodimer. The cofactor is Mg(2+).

The protein localises to the cytoplasm. The catalysed reaction is N,N'-diacetylchitobiose + H2O = N-acetyl-beta-D-glucosaminyl-(1-&gt;4)-D-glucosamine + acetate. It catalyses the reaction diacetylchitobiose-6'-phosphate + H2O = N'-monoacetylchitobiose-6'-phosphate + acetate. The protein operates within glycan degradation; chitin degradation. Functionally, involved in the degradation of chitin. ChbG is essential for growth on the acetylated chitooligosaccharides chitobiose and chitotriose but is dispensable for growth on cellobiose and chitosan dimer, the deacetylated form of chitobiose. Deacetylation of chitobiose-6-P and chitotriose-6-P is necessary for both the activation of the chb promoter by the regulatory protein ChbR and the hydrolysis of phosphorylated beta-glucosides by the phospho-beta-glucosidase ChbF. Catalyzes the removal of only one acetyl group from chitobiose-6-P to yield monoacetylchitobiose-6-P, the inducer of ChbR and the substrate of ChbF. This chain is Chitooligosaccharide deacetylase, found in Escherichia coli O127:H6 (strain E2348/69 / EPEC).